The primary structure comprises 98 residues: Large ribosomal subunit protein uL23 (98 aa).

This sequence belongs to the universal ribosomal protein uL23 family. Part of the 50S ribosomal subunit. Contacts protein L29, and trigger factor when it is bound to the ribosome.

One of the early assembly proteins it binds 23S rRNA. One of the proteins that surrounds the polypeptide exit tunnel on the outside of the ribosome. Forms the main docking site for trigger factor binding to the ribosome. The chain is Large ribosomal subunit protein uL23 from Streptococcus equi subsp. equi (strain 4047).